The sequence spans 348 residues: Photosystem II protein D1 (348 aa).

The next 3 helical transmembrane spans lie at Tyr33–Val50, His122–Phe137, and Trp146–Ala160. His122 contacts chlorophyll a. Residue Tyr130 coordinates pheophytin a. [CaMn4O5] cluster is bound by residues Asp174 and Glu193. Residues Phe201–Leu222 traverse the membrane as a helical segment. Residue His202 participates in chlorophyll a binding. A quinone is bound by residues His219 and Ser268–Phe269. His219 is a Fe cation binding site. A Fe cation-binding site is contributed by His276. The chain crosses the membrane as a helical span at residues Phe278–Leu292. [CaMn4O5] cluster is bound by residues His336, Glu337, Asp346, and Ala348.

It belongs to the reaction center PufL/M/PsbA/D family. In terms of assembly, PSII is composed of 1 copy each of membrane proteins PsbA, PsbB, PsbC, PsbD, PsbE, PsbF, PsbH, PsbI, PsbJ, PsbK, PsbL, PsbM, PsbT, PsbX, PsbY, PsbZ, Psb30/Ycf12, at least 3 peripheral proteins of the oxygen-evolving complex and a large number of cofactors. It forms dimeric complexes. The D1/D2 heterodimer binds P680, chlorophylls that are the primary electron donor of PSII, and subsequent electron acceptors. It shares a non-heme iron and each subunit binds pheophytin, quinone, additional chlorophylls, carotenoids and lipids. D1 provides most of the ligands for the Mn4-Ca-O5 cluster of the oxygen-evolving complex (OEC). There is also a Cl(-1) ion associated with D1 and D2, which is required for oxygen evolution. The PSII complex binds additional chlorophylls, carotenoids and specific lipids. serves as cofactor. Tyr-165 forms a radical intermediate that is referred to as redox-active TyrZ, YZ or Y-Z.

It is found in the plastid. The protein resides in the chloroplast thylakoid membrane. The catalysed reaction is 2 a plastoquinone + 4 hnu + 2 H2O = 2 a plastoquinol + O2. Its function is as follows. Photosystem II (PSII) is a light-driven water:plastoquinone oxidoreductase that uses light energy to abstract electrons from H(2)O, generating O(2) and a proton gradient subsequently used for ATP formation. It consists of a core antenna complex that captures photons, and an electron transfer chain that converts photonic excitation into a charge separation. The D1/D2 (PsbA/PsbD) reaction center heterodimer binds P680, the primary electron donor of PSII as well as several subsequent electron acceptors. The sequence is that of Photosystem II protein D1 from Heterocapsa triquetra (Dinoflagellate).